The sequence spans 382 residues: Serine protease 23 (382 aa).

A signal peptide spans 1–22 (MAGIPGLFILLVLLCVFMQVSP). Asparagine 92 carries N-linked (GlcNAc...) asparagine glycosylation. Cysteines 159 and 175 form a disulfide. The active-site Charge relay system is the histidine 174. Asparagine 206 carries an N-linked (GlcNAc...) asparagine glycan. Residues aspartate 239 and serine 315 each act as charge relay system in the active site.

Belongs to the peptidase S1 family.

It localises to the secreted. This is Serine protease 23 (Prss23) from Mus musculus (Mouse).